A 128-amino-acid polypeptide reads, in one-letter code: Anion exchange transporter (128 aa).

Residues leucine 1 to lysine 14 are Extracellular-facing. A helical membrane pass occupies residues isoleucine 15 to cysteine 35. Residues threonine 36 to serine 66 lie on the Cytoplasmic side of the membrane. Residues alanine 67 to alanine 87 form a helical membrane-spanning segment. Residues glutamine 88–glutamate 103 lie on the Extracellular side of the membrane. Residues phenylalanine 104 to alanine 124 form a helical membrane-spanning segment. Residues alanine 125–arginine 128 lie on the Cytoplasmic side of the membrane.

Belongs to the SLC26A/SulP transporter (TC 2.A.53) family. As to expression, expressed in gastric epithelium, predominantly in the gastric parietal cells but also at lower levels in mucosal cells.

The protein localises to the basolateral cell membrane. The protein resides in the recycling endosome membrane. It localises to the apical cell membrane. It is found in the lateral cell membrane. The catalysed reaction is chloride(in) = chloride(out). The enzyme catalyses iodide(out) = iodide(in). It carries out the reaction bromide(in) = bromide(out). It catalyses the reaction oxalate(in) = oxalate(out). The catalysed reaction is nitrate(in) = nitrate(out). The enzyme catalyses sulfate(in) = sulfate(out). It carries out the reaction D-gluconate(in) = D-gluconate(out). It catalyses the reaction thiocyanate(in) = thiocyanate(out). The catalysed reaction is hydrogencarbonate(in) = hydrogencarbonate(out). The enzyme catalyses hydrogencarbonate(in) + chloride(out) = hydrogencarbonate(out) + chloride(in). Functionally, acts as an anion channel mediating the transport of chloride, bromide, iodide, nitrate, sulfate, gluconate, thiocyanate, oxalate and bicarbonate ions. Its permeability towards bicarbonate is weak and increases when pH is above 7. Mediates thiocyanate transport in retinal pigment epithelium cells. Mediates iodide transport in the thyroid gland, playing an important role in the synthesis of thyroid hormones and the maintenance of thyroid function. In Oryctolagus cuniculus (Rabbit), this protein is Anion exchange transporter.